We begin with the raw amino-acid sequence, 188 residues long: Pallidipin (188 aa).

Positions M1–A18 are cleaved as a signal peptide. Cystine bridges form between C21-C137, C55-C184, and C89-C105.

This sequence belongs to the calycin superfamily. Triabin family. As to expression, expressed in salivary glands.

It is found in the secreted. Functionally, has been described as a specific inhibitor of collagen-induced platelet aggregation. However, as it does not affect platelet shape change or adhesion, it is plausible that it exerts its antiplatelet activity by a mechanism similar to that of triplatin, moubatin and dipetalodipin as scavenging eicosanoids involved in inflammation such as thromboxane A2 (TXA2). The sequence is that of Pallidipin from Meccus pallidipennis (Triatomine bug).